We begin with the raw amino-acid sequence, 859 residues long: Protein translocase subunit SecA (859 aa).

ATP-binding positions include glutamine 88, 106–110 (GEGKT), and aspartate 496. Residues 818 to 838 (FSHQPQSEVKVSRNDPCPCGS) are disordered. Zn(2+)-binding residues include cysteine 834, cysteine 836, cysteine 845, and cysteine 846.

Belongs to the SecA family. In terms of assembly, monomer and homodimer. Part of the essential Sec protein translocation apparatus which comprises SecA, SecYEG and auxiliary proteins SecDF-YajC and YidC. It depends on Zn(2+) as a cofactor.

Its subcellular location is the cell inner membrane. The protein resides in the cytoplasm. The catalysed reaction is ATP + H2O + cellular proteinSide 1 = ADP + phosphate + cellular proteinSide 2.. Functionally, part of the Sec protein translocase complex. Interacts with the SecYEG preprotein conducting channel. Has a central role in coupling the hydrolysis of ATP to the transfer of proteins into and across the cell membrane, serving as an ATP-driven molecular motor driving the stepwise translocation of polypeptide chains across the membrane. The sequence is that of Protein translocase subunit SecA from Wolinella succinogenes (strain ATCC 29543 / DSM 1740 / CCUG 13145 / JCM 31913 / LMG 7466 / NCTC 11488 / FDC 602W) (Vibrio succinogenes).